A 294-amino-acid polypeptide reads, in one-letter code: ATP synthase gamma chain (294 aa).

The protein belongs to the ATPase gamma chain family. As to quaternary structure, F-type ATPases have 2 components, CF(1) - the catalytic core - and CF(0) - the membrane proton channel. CF(1) has five subunits: alpha(3), beta(3), gamma(1), delta(1), epsilon(1). CF(0) has three main subunits: a, b and c.

The protein resides in the cell inner membrane. Functionally, produces ATP from ADP in the presence of a proton gradient across the membrane. The gamma chain is believed to be important in regulating ATPase activity and the flow of protons through the CF(0) complex. The chain is ATP synthase gamma chain from Paramagnetospirillum magneticum (strain ATCC 700264 / AMB-1) (Magnetospirillum magneticum).